A 612-amino-acid polypeptide reads, in one-letter code: Dihydroxy-acid dehydratase (612 aa).

D81 serves as a coordination point for Mg(2+). Residue C122 coordinates [2Fe-2S] cluster. 2 residues coordinate Mg(2+): D123 and K124. Residue K124 is modified to N6-carboxylysine. A [2Fe-2S] cluster-binding site is contributed by C193. Position 489 (E489) interacts with Mg(2+). The Proton acceptor role is filled by S515.

The protein belongs to the IlvD/Edd family. As to quaternary structure, homodimer. It depends on [2Fe-2S] cluster as a cofactor. Requires Mg(2+) as cofactor.

The enzyme catalyses (2R)-2,3-dihydroxy-3-methylbutanoate = 3-methyl-2-oxobutanoate + H2O. It carries out the reaction (2R,3R)-2,3-dihydroxy-3-methylpentanoate = (S)-3-methyl-2-oxopentanoate + H2O. It participates in amino-acid biosynthesis; L-isoleucine biosynthesis; L-isoleucine from 2-oxobutanoate: step 3/4. The protein operates within amino-acid biosynthesis; L-valine biosynthesis; L-valine from pyruvate: step 3/4. In terms of biological role, functions in the biosynthesis of branched-chain amino acids. Catalyzes the dehydration of (2R,3R)-2,3-dihydroxy-3-methylpentanoate (2,3-dihydroxy-3-methylvalerate) into 2-oxo-3-methylpentanoate (2-oxo-3-methylvalerate) and of (2R)-2,3-dihydroxy-3-methylbutanoate (2,3-dihydroxyisovalerate) into 2-oxo-3-methylbutanoate (2-oxoisovalerate), the penultimate precursor to L-isoleucine and L-valine, respectively. This chain is Dihydroxy-acid dehydratase, found in Stenotrophomonas maltophilia (strain R551-3).